The sequence spans 473 residues: Photosystem II CP43 reaction center protein (473 aa).

A propeptide spanning residues 1 to 14 is cleaved from the precursor; it reads MKTLYSLRRFYHVE. Thr-15 carries the post-translational modification N-acetylthreonine. Phosphothreonine is present on Thr-15. 5 helical membrane-spanning segments follow: residues 69–93, 134–155, 178–200, 255–275, and 291–312; these read LFEV…PHLA, LLGP…KDRN, KALY…RKIT, KPFA…LSYS, and WFNN…ASQA. Glu-367 contacts [CaMn4O5] cluster. A helical membrane pass occupies residues 447 to 471; that stretch reads RARAAAAGFEKGIDRDFEPVLSMTP.

It belongs to the PsbB/PsbC family. PsbC subfamily. PSII is composed of 1 copy each of membrane proteins PsbA, PsbB, PsbC, PsbD, PsbE, PsbF, PsbH, PsbI, PsbJ, PsbK, PsbL, PsbM, PsbT, PsbX, PsbY, PsbZ, Psb30/Ycf12, at least 3 peripheral proteins of the oxygen-evolving complex and a large number of cofactors. It forms dimeric complexes. Binds multiple chlorophylls and provides some of the ligands for the Ca-4Mn-5O cluster of the oxygen-evolving complex. It may also provide a ligand for a Cl- that is required for oxygen evolution. PSII binds additional chlorophylls, carotenoids and specific lipids. serves as cofactor.

It is found in the plastid. Its subcellular location is the chloroplast thylakoid membrane. Functionally, one of the components of the core complex of photosystem II (PSII). It binds chlorophyll and helps catalyze the primary light-induced photochemical processes of PSII. PSII is a light-driven water:plastoquinone oxidoreductase, using light energy to abstract electrons from H(2)O, generating O(2) and a proton gradient subsequently used for ATP formation. The sequence is that of Photosystem II CP43 reaction center protein from Coffea arabica (Arabian coffee).